The chain runs to 384 residues: FAD-dependent urate hydroxylase (384 aa).

FAD contacts are provided by residues G11, E30 to A31, S43, and V125. Substrate-binding positions include N178, R204, and Y216 to F218. FAD-binding positions include D285 and G295–C299.

The protein belongs to the FAD-dependent urate hydroxylase family. FAD serves as cofactor.

The enzyme catalyses urate + NADH + O2 + H(+) = 5-hydroxyisourate + NAD(+) + H2O. It participates in purine metabolism; urate degradation. In terms of biological role, catalyzes the hydroxylation of uric acid to 5-hydroxyisourate. The chain is FAD-dependent urate hydroxylase (hpxO) from Klebsiella oxytoca.